The sequence spans 899 residues: Protein argonaute (899 aa).

The interval 107 to 129 (TQKPKRRGGRAGGMRGNRGGPST) is disordered. The span at 116–125 (RAGGMRGNRG) shows a compositional bias: gly residues. The PAZ domain occupies 229-313 (SMCELLNENR…KQDDYCNSVL (85 aa)). Residues 555-878 (LVVVVIPGPK…LSKFCGEILG (324 aa)) form the Piwi domain.

The protein belongs to the argonaute family. Ago subfamily. In terms of assembly, interacts with miR2. Highly specific binding to the mRNA m7G-cap. May be a component of the RNA-induced silencing complex (RISC), a sequence-specific, multicomponent nuclease that destroys or silences messenger RNAs homologous to the silencing trigger.

It localises to the cytoplasm. In terms of biological role, plays an essential role in growth and, with Dicer, also involved in microRNA (miRNA)-mediated translational repression. The RNA interference pathway is implicated in antigenic variation having a role in regulation of variant-specific surface protein (VSP)-coding gene expression. Several VSP genes are transcribed but only transcripts encoding the VSP to be expressed accumulate. Antisense RNAs corresponding to the silenced VSP genes are detected. The sequence is that of Protein argonaute from Giardia intestinalis (strain ATCC 50581 / GS clone H7) (Giardia lamblia).